A 219-amino-acid polypeptide reads, in one-letter code: Mitochondrial fission factor homolog A (219 aa).

Over 1–199 (MAEINRMQYE…ENKERVKHEM (199 aa)) the chain is Cytoplasmic. Positions 164 to 194 (DLALADAASLRRQIIKLNRRLLLLEEENKER) form a coiled coil. Residues 200–217 (TMYSIIIIFGLLNSWLWL) traverse the membrane as a helical; Anchor for type IV membrane protein segment. Residues 218–219 (RR) lie on the Extracellular side of the membrane.

The protein belongs to the Tango11 family.

It is found in the mitochondrion outer membrane. The protein localises to the peroxisome. The protein resides in the cytoplasmic vesicle. Its subcellular location is the secretory vesicle. It localises to the synaptic vesicle. Functionally, plays a role in mitochondrial and peroxisomal fission. Promotes the recruitment and association of the fission mediator dynamin-related protein 1 (DNM1L) to the mitochondrial surface. This Xenopus laevis (African clawed frog) protein is Mitochondrial fission factor homolog A (mff-a).